The sequence spans 1774 residues: Kinesin-like protein KIF20B (1774 aa).

Positions 58–477 (YLQVCLRIRP…LKFSTTAQRV (420 aa)) constitute a Kinesin motor domain. Residue 152 to 159 (GLTNSGKT) coordinates ATP. A Phosphoserine modification is found at Ser486. Coiled-coil stretches lie at residues 525-601 (EDVL…KIRE) and 705-747 (QEAI…LVQA). Residues 538–555 (EENEETQNMETELTDEDS) are compositionally biased toward acidic residues. 2 disordered regions span residues 538-557 (EENEETQNMETELTDEDSDK) and 740-799 (ESNS…PPAK). Residues 741–778 (SNSLVQALKTSSKVDTSLTSNKSTCNETSEMPKNSRAQ) show a composition bias toward polar residues. The span at 779-788 (THSERKRLNE) shows a compositional bias: basic and acidic residues. A coiled-coil region spans residues 824–946 (SEVVEGNRVL…QMQTKIDELR (123 aa)). Ser950 carries the post-translational modification Phosphoserine. A necessary and sufficient for interaction with SHTN1 region spans residues 1002–1059 (ENSFHASIEAIWEECKEIVKASSKKSHQIQGLEEQIEKLQVEVKGYREENSDLRAQES). A coiled-coil region spans residues 1021–1507 (KASSKKSHQI…DEEIQELRKA (487 aa)). Residues Ser1107 and Ser1542 each carry the phosphoserine modification. Residues 1514-1774 (TENQTMNPKP…KRRLRTRTAK (261 aa)) form an interaction with PIN1 region. The residue at position 1598 (Thr1598) is a Phosphothreonine; by CDK1. Ser1612 bears the Phosphoserine mark. The disordered stretch occupies residues 1625-1663 (KKNSTPRSNVKFPVSEHRNSPVKKEQKVSVGPSSKKTYS). Basic and acidic residues predominate over residues 1638–1651 (VSEHRNSPVKKEQK). Ser1669 and Ser1694 each carry phosphoserine.

The protein belongs to the TRAFAC class myosin-kinesin ATPase superfamily. Kinesin family. Oligomerizes (via kinesin motor domain). Associates with microtubules. Interacts (via C-terminal globular tail region) with PIN1 (via WW domain). Interacts with PRC1. Interacts with SHTN1 (via N-terminus); the interaction is direct and promotes the association of SHTN1 to microtubules in primary neurons. Associates with microtubules. Phosphorylated during mitosis by CDK1. In terms of tissue distribution, expressed in the brain (at protein level).

It is found in the nucleus. The protein localises to the cytoplasm. It localises to the cytoskeleton. The protein resides in the microtubule organizing center. Its subcellular location is the centrosome. It is found in the nucleolus. The protein localises to the nucleoplasm. It localises to the spindle. The protein resides in the spindle pole. Its subcellular location is the midbody. It is found in the cell projection. The protein localises to the axon. It localises to the growth cone. In terms of biological role, plus-end-directed motor enzyme that is required for completion of cytokinesis. Required for proper midbody organization and abscission in polarized cortical stem cells. Plays a role in the regulation of neuronal polarization by mediating the transport of specific cargos. Participates in the mobilization of SHTN1 and in the accumulation of PIP3 in the growth cone of primary hippocampal neurons in a tubulin and actin-dependent manner. In the developing telencephalon, cooperates with SHTN1 to promote both the transition from the multipolar to the bipolar stage and the radial migration of cortical neurons from the ventricular zone toward the superficial layer of the neocortex. Involved in cerebral cortex growth. Acts as an oncogene for promoting bladder cancer cells proliferation, apoptosis inhibition and carcinogenic progression. This chain is Kinesin-like protein KIF20B, found in Mus musculus (Mouse).